The following is a 535-amino-acid chain: GMP synthase [glutamine-hydrolyzing] (535 aa).

One can recognise a Glutamine amidotransferase type-1 domain in the interval 24 to 217 (KILIVDFGSQ…VRKVAGLKGD (194 aa)). The active-site Nucleophile is the Cys101. Catalysis depends on residues His191 and Glu193. The GMPS ATP-PPase domain maps to 218-410 (WTMRAFREEA…LGLPEVFVGR (193 aa)). 245 to 251 (SGGVDSA) contributes to the ATP binding site.

In terms of assembly, homodimer.

The catalysed reaction is XMP + L-glutamine + ATP + H2O = GMP + L-glutamate + AMP + diphosphate + 2 H(+). It participates in purine metabolism; GMP biosynthesis; GMP from XMP (L-Gln route): step 1/1. Functionally, catalyzes the synthesis of GMP from XMP. This chain is GMP synthase [glutamine-hydrolyzing], found in Rhodopseudomonas palustris (strain BisB18).